The primary structure comprises 715 residues: Polyribonucleotide nucleotidyltransferase (715 aa).

2 residues coordinate Mg(2+): Asp498 and Asp504. The KH domain maps to 565–625 (PKVCMMQIKP…ETVKKTVAFI (61 aa)). Residues 635–709 (GTCYQASILR…RIDFLLLPKK (75 aa)) form the S1 motif domain.

It belongs to the polyribonucleotide nucleotidyltransferase family. It depends on Mg(2+) as a cofactor.

It is found in the cytoplasm. It catalyses the reaction RNA(n+1) + phosphate = RNA(n) + a ribonucleoside 5'-diphosphate. Its function is as follows. Involved in mRNA degradation. Catalyzes the phosphorolysis of single-stranded polyribonucleotides processively in the 3'- to 5'-direction. The protein is Polyribonucleotide nucleotidyltransferase of Aster yellows witches'-broom phytoplasma (strain AYWB).